Consider the following 172-residue polypeptide: Putative phosphoesterase BC_1225 (172 aa).

Histidine 34 acts as the Proton donor in catalysis. 2 consecutive short sequence motifs (HXTX) follow at residues 34–37 (HITL) and 115–118 (HLTI). Histidine 115 (proton acceptor) is an active-site residue.

This sequence belongs to the 2H phosphoesterase superfamily. YjcG family.

The chain is Putative phosphoesterase BC_1225 from Bacillus cereus (strain ATCC 14579 / DSM 31 / CCUG 7414 / JCM 2152 / NBRC 15305 / NCIMB 9373 / NCTC 2599 / NRRL B-3711).